A 1160-amino-acid chain; its full sequence is Protein GIGANTEA (1160 aa).

Residues 158–169 are compositionally biased toward polar residues; the sequence is CSSTSDQASSCE. Disordered regions lie at residues 158–188, 600–629, and 800–830; these read CSST…RKPL, GGSK…RNRC, and PVKK…SRSH. Residues 170–187 show a composition bias toward basic and acidic residues; that stretch reads SMEKRANGSPRNEPDRKP. Basic and acidic residues predominate over residues 801 to 812; the sequence is VKKDEPPIEEKN.

The protein belongs to the GIGANTEA family.

The protein resides in the nucleus. Involved in regulation of circadian rhythm, and in the control of the photoperiodic flowering. Acts as a suppressor of flowering under short-day (SD) and long-day (LD) conditions. Activates Hd1/CONSTANS gene. In Oryza sativa subsp. japonica (Rice), this protein is Protein GIGANTEA (GI).